Reading from the N-terminus, the 689-residue chain is Translation initiation factor IF-2 (689 aa).

Residues 41-109 (DYERVFGGGN…EAPAAEEREA (69 aa)) form a disordered region. Over residues 61 to 70 (RKGRQKKRRR) the composition is skewed to basic residues. Over residues 80–94 (RGPRAAAPSRPSRGR) the composition is skewed to low complexity. Over residues 96–109 (AAREEAPAAEEREA) the composition is skewed to basic and acidic residues. A tr-type G domain is found at 192–361 (EKPPVITVMG…LVVAELEELR (170 aa)). The G1 stretch occupies residues 201 to 208 (GHVDHGKT). Position 201-208 (201-208 (GHVDHGKT)) interacts with GTP. Positions 226–230 (GITQH) are G2. The interval 247 to 250 (DTPG) is G3. GTP contacts are provided by residues 247–251 (DTPGH) and 301–304 (NKID). The interval 301 to 304 (NKID) is G4. Positions 337–339 (SAK) are G5.

This sequence belongs to the TRAFAC class translation factor GTPase superfamily. Classic translation factor GTPase family. IF-2 subfamily.

It localises to the cytoplasm. One of the essential components for the initiation of protein synthesis. Protects formylmethionyl-tRNA from spontaneous hydrolysis and promotes its binding to the 30S ribosomal subunits. Also involved in the hydrolysis of GTP during the formation of the 70S ribosomal complex. The chain is Translation initiation factor IF-2 from Rubrobacter xylanophilus (strain DSM 9941 / JCM 11954 / NBRC 16129 / PRD-1).